We begin with the raw amino-acid sequence, 941 residues long: Protocadherin alpha-12 (941 aa).

An N-terminal signal peptide occupies residues 1–29; it reads MVIIGPRGPGSQRLLLSLLLLAAWEVGSG. 6 Cadherin domains span residues 30–133, 134–242, 243–350, 351–455, 456–565, and 581–678; these read QLHY…PPVF, RERE…GPAF, DKPS…VPEV, MVTS…APAF, AQPE…APAL, and VPRS…APKT. At 30-697 the chain is on the extracellular side; that stretch reads QLHYSVYEEA…DPEAALVDIN (668 aa). 2 N-linked (GlcNAc...) asparagine glycosylation sites follow: asparagine 257 and asparagine 265. An N-linked (GlcNAc...) asparagine glycan is attached at asparagine 548. A helical transmembrane segment spans residues 698–718; that stretch reads VYLIIAICAVSSLLVLTLLLY. At 719 to 941 the chain is on the cytoplasmic side; the sequence is TALRCSAPPT…GNSTTDNSDQ (223 aa). PXXP repeat units lie at residues 734 to 737, 790 to 793, 823 to 826, 863 to 866, and 882 to 885; these read PGKP, PRQP, PGGP, GPGN, and PGSP. The tract at residues 734–885 is 5 X 4 AA repeats of P-X-X-P; that stretch reads PGKPTLVCSS…PDKFIIPGSP (152 aa). The segment at 818–941 is disordered; it reads ILRAGPGGPD…GNSTTDNSDQ (124 aa). Positions 900–914 are enriched in basic and acidic residues; sequence DKSDFITFGKKEETK.

The protein resides in the cell membrane. Potential calcium-dependent cell-adhesion protein. May be involved in the establishment and maintenance of specific neuronal connections in the brain. The sequence is that of Protocadherin alpha-12 (PCDHA12) from Pan troglodytes (Chimpanzee).